Consider the following 139-residue polypeptide: Protein spalt-accessory (139 aa).

An N-terminal signal peptide occupies residues 1–16 (MKLLIALLALVTAAIA). Residues 60–75 (GIGQGGVHPGQGGFAG) show a composition bias toward gly residues. Positions 60 to 139 (GIGQGGVHPG…HHEHHGHHRH (80 aa)) are disordered. Positions 109–121 (NPHEYPEHHGEHH) are enriched in basic and acidic residues. Residues 122–139 (REHHEHHGHHEHHGHHRH) show a composition bias toward basic residues.

The protein localises to the secreted. Likely to be involved in the establishment of the head. In Drosophila simulans (Fruit fly), this protein is Protein spalt-accessory (sala).